The chain runs to 133 residues: FPRL1 inhibitory protein (133 aa).

Positions 1–28 (MKKNITKTIIASTVIAAGLLTQTNDAKA) are cleaved as a signal peptide.

The protein belongs to the CHIPS/FLIPr family.

Its subcellular location is the secreted. Its function is as follows. May be involved in countering the first line of host defense mechanisms. Impairs the leukocyte response to FPRL1 agonists by binding directly to host FPRL1. The chain is FPRL1 inhibitory protein (flr) from Staphylococcus aureus (strain USA300).